The following is a 4911-amino-acid chain: Histone-lysine N-methyltransferase 2C (4911 aa).

The disordered stretch occupies residues 1–101 (MSSEEDKSVE…EDAEAEVDNS (101 aa)). A compositionally biased stretch (pro residues) spans 12-28 (PQPPPPPPEEPGAPAPS). Residues serine 28 and serine 46 each carry the phosphoserine modification. A DNA-binding region (a.T hook) is located at residues 34–46 (KRPRGRPRKDGAS). Positions 50 to 59 (RARKKPRSRG) are enriched in basic residues. The span at 64-81 (EDEDSMDGLETTETETIV) shows a compositional bias: acidic residues. Serine 89 is subject to Phosphoserine. A coiled-coil region spans residues 92-112 (EDAEAEVDNSKQLIPTLQRSV). Residue serine 113 is modified to Phosphoserine. Residues 164-203 (RNQPSNKKDIDDNSNGTYEKMQNSAPRKQRGQRKERSPQQ) are disordered. Positions 176–189 (NSNGTYEKMQNSAP) are enriched in polar residues. Position 200 is a phosphoserine (serine 200). Residues 227–262 (ELSLVGLPDAIDIQALFDSTGTCWAHHRCVEWSLGV) form a C2HC pre-PHD-type 1; degenerate zinc finger. 4 consecutive PHD-type zinc fingers follow at residues 283-331 (ERCA…PEHI), 341-391 (DANC…CKVC), 388-438 (CKVC…CRIC), and 464-520 (DNLC…CKHL). The RING-type zinc-finger motif lies at 344-389 (CAVCDSPGDLLDQFFCTTCGQHYHGMCLDIAVTPLKRAGWQCPECK). A DHHC domain is found at 436 to 489 (RICIECGTRSSSQWHHNCLICDNCYQQQDNLCPFCGKCYHPELQKDMLHCNMCK). Residues 644 to 672 (EDKMEVTENIEVVTHQITVQQEQLQLLEE) are a coiled coil. Basic and acidic residues predominate over residues 721 to 730 (QGEKEQKENS). The disordered stretch occupies residues 721–742 (QGEKEQKENSELSTGLMDSEMT). The residue at position 758 (lysine 758) is an N6-acetyllysine. The segment covering 763–791 (SSETESSFSSSADISKADVSSSPTPSSDL) has biased composition (low complexity). 3 disordered regions span residues 763 to 798 (SSETESSFSSSADISKADVSSSPTPSSDLPSHDMLH), 828 to 864 (PAITKRKFSPGRPRSKQGAWSTHNTVSPPSWSPDISE), and 885 to 912 (GRGSGFPGKRRPRGAGLSGRGGRGRSKL). A compositionally biased stretch (basic residues) spans 830-842 (ITKRKFSPGRPRS). Polar residues predominate over residues 845–856 (GAWSTHNTVSPP). A Phosphoserine modification is found at serine 854. PHD-type zinc fingers lie at residues 957–1010 (QDMC…CTVC), 1007–1057 (CTVC…CVWC), and 1084–1139 (LSSC…CRPY). Positions 1215–1324 (AVLQTPPDIQ…LPCRDDGWSE (110 aa)) are disordered. The segment covering 1224 to 1270 (QSEHSRDGEMDDSREGELMDCDGKSESSPEREAVDDETKGVEGTDGV) has biased composition (basic and acidic residues). Serine 1301 is subject to Phosphoserine. Positions 1338–1366 (TESTEKIKKRYRKRKNKLEETFPAYLQEA) form a coiled coil. Over residues 1406 to 1416 (PSLDPLLSSSS) the composition is skewed to low complexity. Disordered stretches follow at residues 1406-1431 (PSLDPLLSSSSAPTKSGTHGPADDPL) and 1458-1485 (HSDIGPVTDDPSSLPQPNVNQSSRPLSE). The span at 1467–1482 (DPSSLPQPNVNQSSRP) shows a compositional bias: polar residues. Lysine 1508 is modified (N6-acetyllysine). Disordered regions lie at residues 1604–1630 (FNPMASDPNNSWTSSAPTVEGENDTMS) and 1709–2448 (VQMS…SPVA). 2 stretches are compositionally biased toward polar residues: residues 1610-1620 (DPNNSWTSSAP) and 1709-1727 (VQMSNDSMKRQQQQDSIDP). Residues 1729–1753 (SRIDSELFKDPLKQRESEHEQEWKF) show a composition bias toward basic and acidic residues. Positions 1754–1787 (RQQMRQKSKQQAKIEATQKLEQVKNEQQQQQQQQ) form a coiled coil. Lysine 1772 carries the post-translational modification N6-acetyllysine. Residues 1788-1823 (FGSQHLLVQSGSDTPSSGIQSPLTPQPGNGNMSPAQ) show a composition bias toward polar residues. The span at 1851–1860 (QAPPPPPAPS) shows a compositional bias: pro residues. Over residues 1861–1875 (RIPIQDSLSQAQTSQ) the composition is skewed to low complexity. The segment covering 1927 to 1945 (TPLSSVSRPLQMNETTANR) has biased composition (polar residues). The residue at position 1987 (serine 1987) is a Phosphoserine. Lysine 2009 is subject to N6-acetyllysine. Composition is skewed to polar residues over residues 2054 to 2065 (QDPYGSVSQASR), 2085 to 2094 (FSHNQSNDPY), 2115 to 2131 (AFSQPGTISRPTSQDPY), and 2144 to 2159 (SYSQSSGTARSNTDPY). The span at 2173–2187 (PYSQQPQTPRPSTQT) shows a compositional bias: low complexity. Polar residues-rich tracts occupy residues 2302–2319 (SPMTPRSQSDSFGTSQTA), 2335–2353 (CASSNSPMHSQGQQFSGVS), and 2362–2375 (SGVTDTQNTVNMAQ). The span at 2377–2389 (DTEKLRQRQKLRE) shows a compositional bias: basic and acidic residues. The segment covering 2390–2399 (IILQQQQQKK) has biased composition (low complexity). Residues arginine 2454 and arginine 2571 each carry the asymmetric dimethylarginine modification. Disordered regions lie at residues 2589–2694 (RHGN…SDDP), 2793–2887 (EPKK…RETA), 2925–2954 (EKSDNSDIRPSGSPPPPTLPASPSNHVSSL), and 2989–3029 (VNPG…SGPQ). Composition is skewed to polar residues over residues 2629-2645 (PPSQQEQGHSVHSSSMV) and 2661-2682 (PLSTSVPSETTSDNLQITTQPS). A compositionally biased stretch (basic and acidic residues) spans 2793-2811 (EPKKKEQENKTLVLSDKHS). N6-acetyllysine is present on residues lysine 2802 and lysine 2809. The span at 2814-2832 (KKSTVTNEVKTEVLSPNSK) shows a compositional bias: polar residues. Phosphoserine is present on serine 2828. An N6-acetyllysine modification is found at lysine 2832. Residues 2833 to 2849 (VESKCETEKNDENKDNV) show a composition bias toward basic and acidic residues. Residues 2851–2860 (TPCSQASAHS) show a composition bias toward polar residues. The segment covering 2861–2884 (DLNDGEKTSLHPCDPDLFEKRTNR) has biased composition (basic and acidic residues). Residue lysine 2867 is modified to N6-acetyllysine. Residues 3011 to 3029 (TQTGPQTSQSGTSSMSGPQ) show a composition bias toward low complexity. Coiled-coil stretches lie at residues 3054-3081 (LLQDLLDQERQEQQQQRQMQAMIRQRSE), 3173-3272 (NDSQ…QQQQ), and 3391-3433 (FSES…EMEQ). The segment covering 3205–3221 (HRKSKKALSAKQRTAKK) has biased composition (basic residues). 5 disordered regions span residues 3205–3241 (HRKSKKALSAKQRTAKKAGREFPEEDAEQLKHVTEQQ), 3353–3409 (PPIA…EQQE), 3527–3583 (PNFS…HSYP), 3596–3919 (IIPE…MANG), and 4024–4053 (VKEEPPEPVPSPIIPILPSTAGKSSESRRN). 2 stretches are compositionally biased toward basic and acidic residues: residues 3222–3238 (AGREFPEEDAEQLKHVT) and 3395–3409 (FQERERKERLREQQE). 4 stretches are compositionally biased toward polar residues: residues 3527-3549 (PNFSSVKQGHGNLSGTSFQQSPV), 3564-3583 (ANSSLPCGQDSTITHGHSYP), 3637-3658 (ISETTSTPAVSTPSELPQQADQ), and 3684-3701 (LPNSDFSQATPNQQTYAN). Basic and acidic residues predominate over residues 3703–3725 (EVDKLSMETPAKTEEIKLEKAET). Residue lysine 3714 is modified to N6-acetyllysine. At serine 3758 the chain carries Phosphoserine. Residues 3803 to 3812 (DCTKDNKLVE) show a composition bias toward basic and acidic residues. Polar residues predominate over residues 3878–3892 (MYSSTDTFTHLKQQN). Over residues 3897–3911 (PPTPPASLPPTPPPM) the composition is skewed to pro residues. Serine 4034 is subject to Phosphoserine. The residue at position 4139 (arginine 4139) is an Asymmetric dimethylarginine. Serine 4267 carries the phosphoserine modification. The C2HC pre-PHD-type 2 zinc-finger motif lies at 4399-4439 (YRKCCFCHEEGDGLTDGPARLLNLDLDLWVHLNCALWSTEV). The segment at 4460–4507 (MKCVFCHKTGATSGCHRFRCTNIYHFTCAIKAQCMFFKDKTMLCPMHK) adopts a PHD-type 8 zinc-finger fold. The 61-residue stretch at 4545–4605 (DHTFRVGSLI…CRYLCSIEEK (61 aa)) folds into the FYR N-terminal domain. One can recognise an FYR C-terminal domain in the interval 4606–4691 (DGRPVFVIRI…EACENYTFRY (86 aa)). A WDR5 interaction motif (WIN) motif is present at residues 4707-4712 (GCARSE). In terms of domain architecture, SET spans 4771–4887 (SNVYLARSRI…KGEELCYDYK (117 aa)). Residues tyrosine 4825 and 4848–4849 (NH) each bind S-adenosyl-L-methionine. Residues cysteine 4851, cysteine 4899, cysteine 4901, and cysteine 4906 each coordinate Zn(2+). Residues 4895-4911 (HKIPCHCGAVNCRKWMN) enclose the Post-SET domain.

It belongs to the class V-like SAM-binding methyltransferase superfamily. Histone-lysine methyltransferase family. TRX/MLL subfamily. Component of the MLL3 complex (also named ASCOM complex), at least composed of catalytic subunit KMT2C/MLL3, ASH2L, RBBP5, WDR5, NCOA6, DPY30, KDM6A, PAXIP1/PTIP, PAGR1 and alpha- and beta-tubulin. Forms a core complex with the evolutionary conserved subcomplex WRAD composed of WDR5, RBBP5, ASH2L/ASH2 and DPY30 subunits; WRAD differentially stimulates the methyltransferase activity. Interacts (via WIN motif) with WDR5. Highly expressed in testis and ovary, followed by brain and liver. Also expressed in placenta, peripherical blood, fetal thymus, heart, lung and kidney. Within brain, expression was highest in hippocampus, caudate nucleus, and substantia nigra. Not detected in skeletal muscle and fetal liver.

The protein resides in the nucleus. It carries out the reaction L-lysyl(4)-[histone H3] + S-adenosyl-L-methionine = N(6)-methyl-L-lysyl(4)-[histone H3] + S-adenosyl-L-homocysteine + H(+). Its function is as follows. Histone methyltransferase that catalyzes methyl group transfer from S-adenosyl-L-methionine to the epsilon-amino group of 'Lys-4' of histone H3 (H3K4). Part of chromatin remodeling machinery predominantly forms H3K4me1 methylation marks at active chromatin sites where transcription and DNA repair take place. Likely plays a redundant role with KMT2D in enriching H3K4me1 mark on primed and active enhancer elements. This is Histone-lysine N-methyltransferase 2C (KMT2C) from Homo sapiens (Human).